Here is a 340-residue protein sequence, read N- to C-terminus: Delta(1)-pyrroline-2-carboxylate reductase 2 (340 aa).

The active-site Charge relay system is S50. H51 acts as the Proton donor in catalysis. A substrate-binding site is contributed by R55. Position 123-127 (123-127) interacts with NADP(+); it reads HFSAL. T163 lines the substrate pocket. 181–183 contributes to the NADP(+) binding site; it reads DFA. 189–190 contacts substrate; sequence RG. D191 functions as the Charge relay system in the catalytic mechanism. NADP(+)-binding positions include 232-233 and 307-313; these read HK and RLPSQRR.

The protein belongs to the LDH2/MDH2 oxidoreductase family. Homodimer.

The enzyme catalyses L-proline + NAD(+) = 1-pyrroline-2-carboxylate + NADH + H(+). It catalyses the reaction L-proline + NADP(+) = 1-pyrroline-2-carboxylate + NADPH + H(+). Its function is as follows. Catalyzes the reduction of Delta(1)-pyrroline-2-carboxylate (Pyr2C) to L-proline, using NADPH as the electron donor. May be involved in a degradation pathway that converts trans-3-hydroxy-L-proline (t3LHyp) to L-proline. The protein is Delta(1)-pyrroline-2-carboxylate reductase 2 of Burkholderia multivorans (strain ATCC 17616 / 249).